A 457-amino-acid chain; its full sequence is Siroheme synthase (457 aa).

The tract at residues 1 to 204 (MDHLPIFCQL…ADEKAVNATT (204 aa)) is precorrin-2 dehydrogenase /sirohydrochlorin ferrochelatase. Residues 22–23 (DV) and 43–44 (LT) contribute to the NAD(+) site. Serine 128 is modified (phosphoserine). The tract at residues 216 to 457 (GEVVLVGAGP…RDKLNWFSNH (242 aa)) is uroporphyrinogen-III C-methyltransferase. An S-adenosyl-L-methionine-binding site is contributed by proline 225. Aspartate 248 acts as the Proton acceptor in catalysis. The Proton donor role is filled by lysine 270. S-adenosyl-L-methionine-binding positions include 301-303 (GGD), isoleucine 306, 331-332 (TA), methionine 382, and glycine 411.

It in the N-terminal section; belongs to the precorrin-2 dehydrogenase / sirohydrochlorin ferrochelatase family. This sequence in the C-terminal section; belongs to the precorrin methyltransferase family.

It carries out the reaction uroporphyrinogen III + 2 S-adenosyl-L-methionine = precorrin-2 + 2 S-adenosyl-L-homocysteine + H(+). It catalyses the reaction precorrin-2 + NAD(+) = sirohydrochlorin + NADH + 2 H(+). The catalysed reaction is siroheme + 2 H(+) = sirohydrochlorin + Fe(2+). It participates in cofactor biosynthesis; adenosylcobalamin biosynthesis; precorrin-2 from uroporphyrinogen III: step 1/1. It functions in the pathway cofactor biosynthesis; adenosylcobalamin biosynthesis; sirohydrochlorin from precorrin-2: step 1/1. Its pathway is porphyrin-containing compound metabolism; siroheme biosynthesis; precorrin-2 from uroporphyrinogen III: step 1/1. The protein operates within porphyrin-containing compound metabolism; siroheme biosynthesis; siroheme from sirohydrochlorin: step 1/1. It participates in porphyrin-containing compound metabolism; siroheme biosynthesis; sirohydrochlorin from precorrin-2: step 1/1. In terms of biological role, multifunctional enzyme that catalyzes the SAM-dependent methylations of uroporphyrinogen III at position C-2 and C-7 to form precorrin-2 via precorrin-1. Then it catalyzes the NAD-dependent ring dehydrogenation of precorrin-2 to yield sirohydrochlorin. Finally, it catalyzes the ferrochelation of sirohydrochlorin to yield siroheme. This is Siroheme synthase from Salmonella typhi.